Consider the following 138-residue polypeptide: Transcription factor Atoh7-a (138 aa).

The bHLH domain occupies Lys-33 to Leu-85.

The protein resides in the nucleus. The protein localises to the perikaryon. It localises to the cell projection. It is found in the axon. Transcription factor that binds to DNA at the consensus sequence 5'-CAG[GC]TG-3'. Positively regulates the determination of retinal ganglion cell fate and formation of the optic nerve and retino-hypothalamic tract. Required for retinal circadian rhythm photoentrainment. Plays a role in brainstem auditory signaling and binaural processing. Regulates the differentiation of olfactory receptor neurons. During retinal neurogenesis, activates the transcription of several genes such as brn3d, coe3, cbfa2t2, glis2, elrC and xgadd45-gamma. In Xenopus laevis (African clawed frog), this protein is Transcription factor Atoh7-a.